Here is a 356-residue protein sequence, read N- to C-terminus: Glucose-1-phosphate thymidylyltransferase (356 aa).

Residues Asp107 and Asp221 each coordinate Mg(2+).

It belongs to the glucose-1-phosphate thymidylyltransferase family. The cofactor is Mg(2+).

The catalysed reaction is dTTP + alpha-D-glucose 1-phosphate + H(+) = dTDP-alpha-D-glucose + diphosphate. Its pathway is antibiotic biosynthesis. Involved in the biosynthesis of the two 2,6-deoxysugars, dTDP-L-oleandrose and dTDP-D-desosamine, attached to the macrolactone ring oleandolide to produce the aglycone antibiotic oleandomycin. Catalyzes the formation of dTDP-glucose from deoxythymidine triphosphate (dTTP) and glucose 1-phosphate. This Streptomyces antibioticus protein is Glucose-1-phosphate thymidylyltransferase.